A 278-amino-acid chain; its full sequence is MADS-box transcription factor PHERES 2 (278 aa).

The MADS-box domain occupies 1–60 (MKRKMKLSLIENSVSRKTTFTKRKKGMTKKLTELVTLCGVEACAVVYSPFNSIPEAWPSR).

As to quaternary structure, interacts with AGL61/DIANA and AGL62. In terms of tissue distribution, male gametophyte, embryo and endosperm.

It is found in the nucleus. Its function is as follows. Probable transcription factor involved in the development of gametophytes and seeds. The chain is MADS-box transcription factor PHERES 2 (PHE2) from Arabidopsis thaliana (Mouse-ear cress).